The following is a 908-amino-acid chain: Translation initiation factor IF-2 (908 aa).

The interval 145–312 is disordered; sequence EIPGLTQRAK…KGKKRQAEKI (168 aa). Positions 167-177 are enriched in basic and acidic residues; the sequence is VVERPEARPSA. Composition is skewed to low complexity over residues 194 to 217 and 263 to 276; these read RPEG…PRPG and VAGA…GAAV. Residues 278–296 are compositionally biased toward basic and acidic residues; that stretch reads KRKEEFKKTELFEKHERVF. The tr-type G domain maps to 408-577; the sequence is KRPPVVTIMG…LLQADVLELK (170 aa). Residues 417–424 are G1; sequence GHVDHGKT. 417–424 lines the GTP pocket; the sequence is GHVDHGKT. A G2 region spans residues 442-446; the sequence is GITQH. Positions 463 to 466 are G3; sequence DTPG. Residues 463–467 and 517–520 each bind GTP; these read DTPGH and NKID. The segment at 517–520 is G4; that stretch reads NKID. The tract at residues 553–555 is G5; sequence SAK.

It belongs to the TRAFAC class translation factor GTPase superfamily. Classic translation factor GTPase family. IF-2 subfamily.

The protein resides in the cytoplasm. Functionally, one of the essential components for the initiation of protein synthesis. Protects formylmethionyl-tRNA from spontaneous hydrolysis and promotes its binding to the 30S ribosomal subunits. Also involved in the hydrolysis of GTP during the formation of the 70S ribosomal complex. The sequence is that of Translation initiation factor IF-2 from Geotalea daltonii (strain DSM 22248 / JCM 15807 / FRC-32) (Geobacter daltonii).